A 396-amino-acid chain; its full sequence is Pre-mRNA-splicing regulator WTAP (396 aa).

Methionine 1 bears the N-acetylmethionine mark. Serine 14 carries the phosphoserine modification. Composition is skewed to low complexity over residues 240–257, 278–291, and 304–316; these read QQQQ…TTAS, SNGS…SGSG, and PSSP…SSNS. A disordered region spans residues 240–396; sequence QQQQSQASAP…SSVNVQGSVL (157 aa). Phosphoserine is present on residues serine 305, serine 306, and serine 341. A compositionally biased stretch (polar residues) spans 340–356; that stretch reads DSPTGSENSLTHQSNDT. Position 350 is a phosphothreonine (threonine 350). The segment covering 357-368 has biased composition (basic and acidic residues); sequence DSSHDPQEEKAV. Positions 380–396 are enriched in polar residues; sequence HVQNGLDSSVNVQGSVL. Position 388 is a phosphoserine (serine 388).

The protein belongs to the fl(2)d family. As to quaternary structure, component of the WMM complex, a N6-methyltransferase complex composed of a catalytic subcomplex, named MAC, and of an associated subcomplex, named MACOM. The MAC subcomplex is composed of METTL3 and METTL14. The MACOM subcomplex is composed of WTAP, ZC3H13, CBLL1/HAKAI, VIRMA, and, in some cases of RBM15 (RBM15 or RBM15B). Interacts with WT1. Also a component of a MACOM-like complex, named WTAP complex, composed of WTAP, ZC3H13, CBLL1, VIRMA, RBM15, BCLAF1 and THRAP3. In terms of tissue distribution, ubiquitously expressed.

It is found in the nucleus speckle. The protein resides in the nucleus. Its subcellular location is the nucleoplasm. The protein localises to the cytoplasm. In terms of biological role, associated component of the WMM complex, a complex that mediates N6-methyladenosine (m6A) methylation of RNAs, a modification that plays a role in the efficiency of mRNA splicing and RNA processing. Required for accumulation of METTL3 and METTL14 to nuclear speckle. Acts as a mRNA splicing regulator. Regulates G2/M cell-cycle transition by binding to the 3' UTR of CCNA2, which enhances its stability. Impairs WT1 DNA-binding ability and inhibits expression of WT1 target genes. This Homo sapiens (Human) protein is Pre-mRNA-splicing regulator WTAP.